The primary structure comprises 269 residues: Ribosomal RNA small subunit methyltransferase J (269 aa).

Residues 124-125 (ER) and Asp188 contribute to the S-adenosyl-L-methionine site.

It belongs to the methyltransferase superfamily. RsmJ family.

The protein localises to the cytoplasm. The catalysed reaction is guanosine(1516) in 16S rRNA + S-adenosyl-L-methionine = N(2)-methylguanosine(1516) in 16S rRNA + S-adenosyl-L-homocysteine + H(+). In terms of biological role, specifically methylates the guanosine in position 1516 of 16S rRNA. This chain is Ribosomal RNA small subunit methyltransferase J, found in Saccharophagus degradans (strain 2-40 / ATCC 43961 / DSM 17024).